The following is a 444-amino-acid chain: tRNA modification GTPase MnmE (444 aa).

Positions 23, 82, and 121 each coordinate (6S)-5-formyl-5,6,7,8-tetrahydrofolate. In terms of domain architecture, TrmE-type G spans Gly216–Asn365. Asn226 serves as a coordination point for K(+). Residues Asn226–Ser231, Thr245–Thr251, and Asp270–Gly273 each bind GTP. Ser230 contributes to the Mg(2+) binding site. Positions 245, 247, and 250 each coordinate K(+). Thr251 contributes to the Mg(2+) binding site. Lys444 is a binding site for (6S)-5-formyl-5,6,7,8-tetrahydrofolate.

It belongs to the TRAFAC class TrmE-Era-EngA-EngB-Septin-like GTPase superfamily. TrmE GTPase family. As to quaternary structure, homodimer. Heterotetramer of two MnmE and two MnmG subunits. Requires K(+) as cofactor.

The protein localises to the cytoplasm. Exhibits a very high intrinsic GTPase hydrolysis rate. Involved in the addition of a carboxymethylaminomethyl (cmnm) group at the wobble position (U34) of certain tRNAs, forming tRNA-cmnm(5)s(2)U34. The polypeptide is tRNA modification GTPase MnmE (Chlamydia trachomatis serovar A (strain ATCC VR-571B / DSM 19440 / HAR-13)).